A 500-amino-acid chain; its full sequence is Lysine--tRNA ligase (500 aa).

Mg(2+) is bound by residues Glu406 and Glu413.

The protein belongs to the class-II aminoacyl-tRNA synthetase family. As to quaternary structure, homodimer. Mg(2+) serves as cofactor.

It localises to the cytoplasm. It catalyses the reaction tRNA(Lys) + L-lysine + ATP = L-lysyl-tRNA(Lys) + AMP + diphosphate. The chain is Lysine--tRNA ligase from Sulfolobus acidocaldarius (strain ATCC 33909 / DSM 639 / JCM 8929 / NBRC 15157 / NCIMB 11770).